A 473-amino-acid polypeptide reads, in one-letter code: NAC domain-containing protein 68 (473 aa).

The NAC domain maps to 4 to 154; sequence GLIGYRFSPT…KYVVCQVKYK (151 aa). Residues 108–160 mediate DNA binding; it reads IGIKKTLVYHEGKSPHGVRTPWVMHEYHITCLPHHKRKYVVCQVKYKGEAAEI. Residues 326–380 are disordered; it reads DHMPRKPVTGTIDYSSDSGSDAGSISTTSYQGTSSPNISVGSSSRHLSSCSSTDS. Composition is skewed to low complexity over residues 340 to 354 and 364 to 379; these read SSDS…STTS and SVGS…SSTD. The chain crosses the membrane as a helical span at residues 446-468; it reads FIYLMKMIIGNIISVLLPVKRLI.

The protein localises to the membrane. It localises to the nucleus. Transcription activator activated by proteolytic cleavage through regulated intramembrane proteolysis (RIP) mediated by calpain or its functional homolog. Regulates cytokinin signaling during cell division. This is NAC domain-containing protein 68 (NAC68) from Arabidopsis thaliana (Mouse-ear cress).